Reading from the N-terminus, the 78-residue chain is DNA-directed RNA polymerase subunit omega (78 aa).

This sequence belongs to the RNA polymerase subunit omega family. In terms of assembly, in cyanobacteria the RNAP catalytic core is composed of 2 alpha, 1 beta, 1 beta', 1 gamma and 1 omega subunit. When a sigma factor is associated with the core the holoenzyme is formed, which can initiate transcription.

It carries out the reaction RNA(n) + a ribonucleoside 5'-triphosphate = RNA(n+1) + diphosphate. In terms of biological role, promotes RNA polymerase assembly. Latches the N- and C-terminal regions of the beta' subunit thereby facilitating its interaction with the beta and alpha subunits. The chain is DNA-directed RNA polymerase subunit omega from Prochlorococcus marinus subsp. pastoris (strain CCMP1986 / NIES-2087 / MED4).